The chain runs to 147 residues: Heavy metal-dependent transcription regulator 1 (147 aa).

An HTH merR-type domain is found at 1-70; that stretch reads MNIGQASKVV…VEQIKDLLAL (70 aa). The segment at residues 3–22 is a DNA-binding region (H-T-H motif); it reads IGQASKVVSGVSSKMIRYYE.

The protein resides in the cytoplasm. Transcriptional regulator involved in acid tolerance. Binds copper. The sequence is that of Heavy metal-dependent transcription regulator 1 (hmrR1) from Rhizobium meliloti (strain 1021) (Ensifer meliloti).